Reading from the N-terminus, the 336-residue chain is MTTNRKDEHILYALEQKSSYNSFDEVELIHSSLPLYNLDEIDLSTEFAGRKWDFPFYINAMTGGSNKGREINQKLAQVAETCGILFVTGSYSAALKNPTDDSFSVKSSHPNLLLGTNIGLDKPVELGLQTVEEMNPVLLQVHVNVMQELLMPEGERKFRSWQSHLADYSKQIPVPIVLKEVGFGMDAKTIERAYEFGVRTVDLSGRGGTSFAYIENRRSGQRDYLNQWGQSTMQALLNAQEWKDKVELLVSGGVRNPLDMIKCLVFGAKAVGLSRTVLELVETYTVEEVIGIVQGWKADLRLIMCSLNCATIADLQKVDYLLYGKLKEANDQMKKA.

Substrate is bound at residue 5 to 6 (RK). Residues 60-62 (AMT), Ser90, and Asn117 each bind FMN. Gln147 is a substrate binding site. Position 148 (Glu148) interacts with Mg(2+). FMN-binding positions include Lys179, Ser204, Thr209, 253-255 (GVR), and 274-275 (SR).

Belongs to the IPP isomerase type 2 family. As to quaternary structure, homooctamer. Dimer of tetramers. Requires FMN as cofactor. NADPH is required as a cofactor. The cofactor is Mg(2+).

The protein resides in the cytoplasm. The enzyme catalyses isopentenyl diphosphate = dimethylallyl diphosphate. In terms of biological role, involved in the biosynthesis of isoprenoids. Catalyzes the 1,3-allylic rearrangement of the homoallylic substrate isopentenyl (IPP) to its allylic isomer, dimethylallyl diphosphate (DMAPP). This is Isopentenyl-diphosphate delta-isomerase from Streptococcus pneumoniae (strain ATCC BAA-255 / R6).